The sequence spans 1349 residues: Patatin-like phospholipase domain-containing protein 7 (1349 aa).

Over 1-36 the chain is Lumenal; the sequence is MQKEEDVCPEAGYCLGTALSSWGLHFMEEHSQSTML. A helical transmembrane segment spans residues 37–57; that stretch reads MGIGIGVLLTLAFVGLAAFFV. Topologically, residues 58-1349 are cytoplasmic; it reads YRKVSRFRRA…DQGPRLYRPS (1292 aa). 170–297 provides a ligand contact to a nucleoside 3',5'-cyclic phosphate; sequence VLGHFEKPLF…VRVVQIIMVR (128 aa). The interval 340 to 361 is disordered; it reads MSYGPEEQLERSPRLSEFNSSD. Phosphoserine is present on residues Ser341 and Ser377. A nucleoside 3',5'-cyclic phosphate contacts are provided by residues 496–599 and 610–715; these read FLHV…VVRR and ALDW…LGEK. The segment at 678 to 964 is involved in the binding to lipid droplets; that stretch reads VHAVRDSELA…RGCAQVGILR (287 aa). The 167-residue stretch at 947–1113 folds into the PNPLA domain; sequence LVLGGGGARG…INNLPADVAR (167 aa). Residues 951-956 carry the GXGXXG motif; the sequence is GGGARG. Residues 978-982 carry the GXSXG motif; that stretch reads GTSIG. Ser980 functions as the Nucleophile in the catalytic mechanism. The Proton acceptor role is filled by Asp1100. A DGA/G motif is present at residues 1100-1102; that stretch reads DGG. Phosphoserine is present on Ser1277. Thr1281 bears the Phosphothreonine mark. The segment at 1297–1349 is disordered; sequence DFQSTGIELDSDSECEPSMSQGPHSLTSPKQSQDSFPWLPNQDDQGPRLYRPS. Positions 1314-1331 are enriched in polar residues; that stretch reads SMSQGPHSLTSPKQSQDS.

Belongs to the NTE family. Expressed in the brain, liver, kidney, lung and testis.

Its subcellular location is the endoplasmic reticulum membrane. The protein resides in the lipid droplet. It catalyses the reaction a 1-acyl-sn-glycero-3-phosphocholine + H2O = sn-glycerol 3-phosphocholine + a fatty acid + H(+). The enzyme catalyses 1-(9Z-octadecenoyl)-sn-glycero-3-phosphocholine + H2O = sn-glycerol 3-phosphocholine + (9Z)-octadecenoate + H(+). The catalysed reaction is 1-(9Z-octadecenoyl)-sn-glycero-3-phosphoethanolamine + H2O = sn-glycero-3-phosphoethanolamine + (9Z)-octadecenoate + H(+). It carries out the reaction 1-(9Z-octadecenoyl)-sn-glycero-3-phospho-L-serine + H2O = sn-glycero-3-phospho-L-serine + (9Z)-octadecenoate + H(+). It catalyses the reaction 1-hexadecanoyl-sn-glycero-3-phosphocholine + H2O = sn-glycerol 3-phosphocholine + hexadecanoate + H(+). The enzyme catalyses 1-hexadecanoyl-sn-glycero-3-phosphate + H2O = sn-glycerol 3-phosphate + hexadecanoate + H(+). Its function is as follows. Lysophospholipase which preferentially deacylates unsaturated lysophosphatidylcholine (C18:1), generating glycerophosphocholine. Also can deacylate, to a lesser extent, lysophosphatidylethanolamine (C18:1), lysophosphatidyl-L-serine (C18:1) and lysophosphatidic acid (C16:0). The chain is Patatin-like phospholipase domain-containing protein 7 (Pnpla7) from Rattus norvegicus (Rat).